A 116-amino-acid chain; its full sequence is Heme-degrading monooxygenase (116 aa).

Positions 2-92 (VIVTNTSKIT…EYILENKISF (91 aa)) constitute an ABM domain. Residue asparagine 6 coordinates Fe cation. Histidine 76 serves as a coordination point for heme.

It belongs to the antibiotic biosynthesis monooxygenase family. Heme-degrading monooxygenase IsdG subfamily. In terms of assembly, homodimer.

It localises to the cytoplasm. The enzyme catalyses heme b + 3 reduced [NADPH--hemoprotein reductase] + 3 O2 = biliverdin IXalpha + CO + Fe(2+) + 3 oxidized [NADPH--hemoprotein reductase] + 3 H2O + H(+). Its function is as follows. Allows bacterial pathogens to use the host heme as an iron source. Catalyzes the oxidative degradation of the heme macrocyclic porphyrin ring to the biliverdin in the presence of a suitable electron donor such as ascorbate or NADPH--cytochrome P450 reductase, with subsequent release of free iron. This Halalkalibacterium halodurans (strain ATCC BAA-125 / DSM 18197 / FERM 7344 / JCM 9153 / C-125) (Bacillus halodurans) protein is Heme-degrading monooxygenase.